We begin with the raw amino-acid sequence, 151 residues long: D-aminoacyl-tRNA deacylase (151 aa).

The short motif at 136-137 is the Gly-cisPro motif, important for rejection of L-amino acids element; that stretch reads GP.

The protein belongs to the DTD family. In terms of assembly, homodimer.

The protein localises to the cytoplasm. It carries out the reaction glycyl-tRNA(Ala) + H2O = tRNA(Ala) + glycine + H(+). The enzyme catalyses a D-aminoacyl-tRNA + H2O = a tRNA + a D-alpha-amino acid + H(+). Functionally, an aminoacyl-tRNA editing enzyme that deacylates mischarged D-aminoacyl-tRNAs. Also deacylates mischarged glycyl-tRNA(Ala), protecting cells against glycine mischarging by AlaRS. Acts via tRNA-based rather than protein-based catalysis; rejects L-amino acids rather than detecting D-amino acids in the active site. By recycling D-aminoacyl-tRNA to D-amino acids and free tRNA molecules, this enzyme counteracts the toxicity associated with the formation of D-aminoacyl-tRNA entities in vivo and helps enforce protein L-homochirality. The chain is D-aminoacyl-tRNA deacylase from Lactococcus lactis subsp. cremoris (strain SK11).